The chain runs to 430 residues: Tol-Pal system protein TolB (430 aa).

An N-terminal signal peptide occupies residues 1–21 (MKQAFRLMVGLLVLWASVLHA).

This sequence belongs to the TolB family. As to quaternary structure, the Tol-Pal system is composed of five core proteins: the inner membrane proteins TolA, TolQ and TolR, the periplasmic protein TolB and the outer membrane protein Pal. They form a network linking the inner and outer membranes and the peptidoglycan layer.

It is found in the periplasm. Its function is as follows. Part of the Tol-Pal system, which plays a role in outer membrane invagination during cell division and is important for maintaining outer membrane integrity. TolB occupies a key intermediary position in the Tol-Pal system because it communicates directly with both membrane-embedded components, Pal in the outer membrane and TolA in the inner membrane. In Edwardsiella ictaluri (strain 93-146), this protein is Tol-Pal system protein TolB.